We begin with the raw amino-acid sequence, 92 residues long: MAFVKRDNKNKKRFQQQNPLFKRKRFCRFTVAGVEQIDYKDLDTLKDFIGDNGKITPARLTGTKAHYQRQLDTAIKRARFLALMPYTDLHKN.

It belongs to the bacterial ribosomal protein bS18 family. Part of the 30S ribosomal subunit. Forms a tight heterodimer with protein bS6.

In terms of biological role, binds as a heterodimer with protein bS6 to the central domain of the 16S rRNA, where it helps stabilize the platform of the 30S subunit. In Cupriavidus necator (strain ATCC 17699 / DSM 428 / KCTC 22496 / NCIMB 10442 / H16 / Stanier 337) (Ralstonia eutropha), this protein is Small ribosomal subunit protein bS18.